Here is a 39-residue protein sequence, read N- to C-terminus: Cytochrome b559 subunit beta (39 aa).

A helical transmembrane segment spans residues tryptophan 14 to serine 30. Heme is bound at residue histidine 18.

Belongs to the PsbE/PsbF family. As to quaternary structure, heterodimer of an alpha subunit and a beta subunit. PSII is composed of 1 copy each of membrane proteins PsbA, PsbB, PsbC, PsbD, PsbE, PsbF, PsbH, PsbI, PsbJ, PsbK, PsbL, PsbM, PsbT, PsbX, PsbY, PsbZ, Psb30/Ycf12, at least 3 peripheral proteins of the oxygen-evolving complex and a large number of cofactors. It forms dimeric complexes. Heme b is required as a cofactor.

The protein resides in the plastid. It localises to the chloroplast thylakoid membrane. In terms of biological role, this b-type cytochrome is tightly associated with the reaction center of photosystem II (PSII). PSII is a light-driven water:plastoquinone oxidoreductase that uses light energy to abstract electrons from H(2)O, generating O(2) and a proton gradient subsequently used for ATP formation. It consists of a core antenna complex that captures photons, and an electron transfer chain that converts photonic excitation into a charge separation. The sequence is that of Cytochrome b559 subunit beta from Adiantum capillus-veneris (Maidenhair fern).